A 392-amino-acid chain; its full sequence is Succinate--CoA ligase [ADP-forming] subunit beta (392 aa).

The ATP-grasp domain occupies 9–248 (KDILKKFGVS…TNEEDPFEVE (240 aa)). Residues K50, 57 to 59 (GRG), E103, M106, and E111 each bind ATP. Mg(2+)-binding residues include N203 and D217. Residues N268 and 325–327 (GIV) each bind substrate.

It belongs to the succinate/malate CoA ligase beta subunit family. In terms of assembly, heterotetramer of two alpha and two beta subunits. It depends on Mg(2+) as a cofactor.

It catalyses the reaction succinate + ATP + CoA = succinyl-CoA + ADP + phosphate. The enzyme catalyses GTP + succinate + CoA = succinyl-CoA + GDP + phosphate. Its pathway is carbohydrate metabolism; tricarboxylic acid cycle; succinate from succinyl-CoA (ligase route): step 1/1. Succinyl-CoA synthetase functions in the citric acid cycle (TCA), coupling the hydrolysis of succinyl-CoA to the synthesis of either ATP or GTP and thus represents the only step of substrate-level phosphorylation in the TCA. The beta subunit provides nucleotide specificity of the enzyme and binds the substrate succinate, while the binding sites for coenzyme A and phosphate are found in the alpha subunit. The chain is Succinate--CoA ligase [ADP-forming] subunit beta from Chlorobium limicola (strain DSM 245 / NBRC 103803 / 6330).